We begin with the raw amino-acid sequence, 777 residues long: Subtilisin-like protease SBT3.3 (777 aa).

An N-terminal signal peptide occupies residues methionine 1–alanine 24. A propeptide spans arginine 25–alanine 111 (removed in mature form). The Inhibitor I9 domain maps to valine 32–glutamate 109. Residues threonine 115–alanine 624 enclose the Peptidase S8 domain. The N-linked (GlcNAc...) asparagine glycan is linked to asparagine 131. Aspartate 145 acts as the Charge relay system in catalysis. Residue asparagine 204 is glycosylated (N-linked (GlcNAc...) asparagine). Histidine 220 functions as the Charge relay system in the catalytic mechanism. Residues asparagine 235, asparagine 397, asparagine 412, asparagine 508, and asparagine 540 are each glycosylated (N-linked (GlcNAc...) asparagine). Residues valine 403 to isoleucine 481 enclose the PA domain. Serine 555 serves as the catalytic Charge relay system. The N-linked (GlcNAc...) asparagine glycan is linked to asparagine 647.

This sequence belongs to the peptidase S8 family.

Its subcellular location is the secreted. The protein localises to the extracellular space. It is found in the extracellular matrix. Functionally, serine protease that plays a role in the control of the establishment of immune priming and systemic induced resistance. In Arabidopsis thaliana (Mouse-ear cress), this protein is Subtilisin-like protease SBT3.3.